Reading from the N-terminus, the 832-residue chain is Putative pentatricopeptide repeat-containing protein At5g08310, mitochondrial (832 aa).

Residues 1-27 constitute a mitochondrion transit peptide; the sequence is MAFSRIALLCQRFSRQQQQRQLLHRPL. PPR repeat units lie at residues 105–139, 140–174, 176–212, 213–247, 252–281, 282–316, 317–351, 352–383, 385–415, 438–472, 473–507, 508–542, 543–577, 578–612, 613–647, 648–682, 683–717, 718–752, and 753–787; these read DMYAYNAMASILSRARQNASLKALVVDVLNSRCFM, SPGAFGFFIRCLGNAGLVDEASSVFDRVREMGLCV, NAYTYNCLLEAISKSNSSSVELVEARLKEMRDCGFHF, DKFTLTPVLQVYCNTGKSERALSVFNEILSRGWLD, TILVVSFCKWGQVDKAFELIEMLEERDIRL, NYKTYCVLIHGFVKESRIDKAFQLFEKMRRMGMNA, DIALYDVLIGGLCKHKDLEMALSLYLEIKRSGIPP, DRGILGKLLCSFSEESELSRITEVIIGDIDKK, VMLLYKSLFEGFIRNDLVHEAYSFIQNLMGN, DSDSLSIVINCLVKANKVDMAVTLLHDIVQNGLIP, GPMMYNNIIEGMCKEGRSEESLKLLGEMKDAGVEP, SQFTLNCIYGCLAERCDFVGALDLLKKMRFYGFEP, WIKHTTFLVKKLCENGRAVDACKYLDDVAGEGFLG, HMVASTAAIDGLIKNEGVDRGLELFRDICANGHCP, DVIAYHVLIKALCKACRTMEADILFNEMVSKGLKP, TVATYNSMIDGWCKEGEIDRGLSCIVRMYEDEKNP, DVITYTSLIHGLCASGRPSEAIFRWNEMKGKDCYP, NRITFMALIQGLCKCGWSGEALVYFREMEEKEMEP, and DSAVYLSLVSSFLSSENINAGFGIFREMVHKGRFP.

Belongs to the PPR family. P subfamily.

It localises to the mitochondrion. The polypeptide is Putative pentatricopeptide repeat-containing protein At5g08310, mitochondrial (Arabidopsis thaliana (Mouse-ear cress)).